We begin with the raw amino-acid sequence, 666 residues long: MSDSHLTAFDKASKAGFIIALGIVYGDIGTSPLYTMQSLVENQGGVNQVSESFILGSISLIIWTLTLITTIKYVLIALKADNHHEGGIFSLFTLVRKMSPWLIIPAMIGGATLLSDGALTPAVTVTSAIEGLKAVPGLSHIYQNQTNVIITTLVILIVLFGIQRFGTGFIGKIFGPVMFIWFSFLGVSGFFNTLGHLEIFKAINPYYALHLLFSPENHRGIFILGSIFLATTGAEALYSDLGHVGRGNIYVSWPFVKMCIVLSYCGQAAWILANKHSGIELNPFFASVPSQLRVYLVSLATLAAIIASQALISGSFTLVSEAMRLKIFPLFRVTYPGANLGQLYIPVINWILFAVTSCTVLAFRTSAHMEAAYGLAITITMLMTTILLKYYLIKKGTRPILAHLVMAFFALVEFIFFLASAIKFMHGGYAVVILALAIVFVMFIWHAGTRIVFKYVKSLNLNDYKEQIKQLRDDVCFDLYQTNVVYLSNRMQDHMIDRSILYSILDKRPKRAQVYWFVNVQVTDEPYTAKYKVDMVGTDYMVRVNLYLGFRMPQTVPRYLRTIVQDLMESGRLPKQEQEYTITPGRDVGDFRFVLIEERVSNARQLSNFERFIMHTKASIKHVTASPMRWFGLQYSEVTLEVVPLILSDILKLPIKELVPVEDSEA.

12 consecutive transmembrane segments (helical) span residues 16–36 (GFII…LYTM), 58–78 (ISLI…LIAL), 100–120 (PWLI…GALT), 141–161 (IYQN…VLFG), 165–185 (FGTG…FSFL), 221–241 (IFIL…YSDL), 253–273 (WPFV…WILA), 294–314 (VYLV…LISG), 343–363 (LYIP…VLAF), 373–393 (YGLA…YYLI), 399–419 (PILA…FFLA), and 424–444 (FMHG…VMFI).

The protein belongs to the HAK/KUP transporter (TC 2.A.72) family.

It is found in the cell membrane. It catalyses the reaction K(+)(in) + H(+)(in) = K(+)(out) + H(+)(out). Its function is as follows. Transport of potassium into the cell. Likely operates as a K(+):H(+) symporter. The polypeptide is Probable potassium transport system protein Kup (Streptococcus pyogenes serotype M49 (strain NZ131)).